Reading from the N-terminus, the 394-residue chain is Junctional adhesion molecule-like (394 aa).

The N-terminal stretch at 1-19 (MFCPLKLILLPVLLDYSLG) is a signal peptide. 2 Ig-like V-type domains span residues 20-132 (LNDL…KAVV) and 137-250 (PEEP…IVLH). Over 20–275 (LNDLNVSPPE…RPLVLGGNQL (256 aa)) the chain is Extracellular. Intrachain disulfides connect Cys42–Cys116 and Cys155–Cys234. N-linked (GlcNAc...) asparagine glycosylation is found at Asn76 and Asn231. The helical transmembrane segment at 276-296 (VIIVGIVCATILLLPVLILIV) threads the bilayer. Over 297-394 (KKTCGNKSSV…GGMPKTQQAF (98 aa)) the chain is Cytoplasmic. The disordered stretch occupies residues 369 to 394 (PSLRSDRNNSLEKKSGGGMPKTQQAF). A compositionally biased stretch (basic and acidic residues) spans 372 to 383 (RSDRNNSLEKKS).

The protein belongs to the immunoglobulin superfamily. As to quaternary structure, homodimer; active form in leukocyte-endothelial cell adhesion. Interacts (homodimeric form) with CXADR. Interacts (via cytoplasmic domain) with the PI3 kinase; upon CXADR-binding. Interacts with ITGA4 and ITGB1; integrin alpha-4/beta-1 may regulate leukocyte to endothelial cells adhesion by controlling JAML homodimerization. In terms of tissue distribution, expression is restricted to the hematopoietic tissues with the exception of liver. Expressed in fetal liver, spleen and thymus. Preferentially expressed by mature leukocytes (at protein level).

The protein localises to the cell membrane. Its subcellular location is the cell junction. In terms of biological role, transmembrane protein of the plasma membrane of leukocytes that control their migration and activation through interaction with CXADR, a plasma membrane receptor found on adjacent epithelial and endothelial cells. The interaction between both receptors mediates the activation of gamma-delta T-cells, a subpopulation of T-cells residing in epithelia and involved in tissue homeostasis and repair. Upon epithelial CXADR-binding, JAML induces downstream cell signaling events in gamma-delta T-cells through PI3-kinase and MAP kinases. It results in proliferation and production of cytokines and growth factors by T-cells that in turn stimulate epithelial tissues repair. It also controls the transmigration of leukocytes within epithelial and endothelial tissues through adhesive interactions with epithelial and endothelial CXADR. The sequence is that of Junctional adhesion molecule-like from Homo sapiens (Human).